Here is a 245-residue protein sequence, read N- to C-terminus: Terpene cyclase prhH (245 aa).

7 helical membrane-spanning segments follow: residues Ile17–Ile37, Ile51–Pro71, His76–Leu96, Ile113–Ala133, Ala138–Ala158, Ser170–Ile190, and Pro205–Tyr225.

Belongs to the paxB family.

It localises to the membrane. The protein operates within secondary metabolite biosynthesis; terpenoid biosynthesis. Functionally, terpene cyclase; part of the gene cluster that mediates the biosynthesis of paraherquonin, a meroterpenoid with a unique, highly congested hexacyclic molecular architecture. The first step of the pathway is the synthesis of 3,5-dimethylorsellinic acid (DMOA) by the polyketide synthase prhL. Synthesis of DMOA is followed by farnesylation by the prenyltransferase prhE, methylesterification by the methyl-transferase prhM, epoxidation of the prenyl chain by the flavin-dependent monooxygenase prhF, and cyclization of the farnesyl moiety by the terpene cyclase prhH, to yield the tetracyclic intermediate, protoaustinoid A. The short chain dehydrogenase prhI then oxidizes the C-3 alcohol group of the terpene cyclase product to transform protoaustinoid A into protoaustinoid B. The FAD-binding monooxygenase prhJ catalyzes the oxidation of protoaustinoid B into preaustinoid A which is further oxidized into preaustinoid A1 by FAD-binding monooxygenase phrK. Finally, prhA leads to berkeleydione via the berkeleyone B intermediate. PrhA is a multifunctional dioxygenase that first desaturates at C5-C6 to form berkeleyone B, followed by rearrangement of the A/B-ring to form the cycloheptadiene moiety in berkeleydione. Berkeleydione serves as the key intermediate for the biosynthesis of paraherquonin as well as many other meroterpenoids. The cytochrome P450 monooxygenases prhB, prhD, and prhN, as well as the isomerase prhC, are probably involved in the late stage of paraherquonin biosynthesis, after the production of berkeleydione. Especially prhC might be a multifunctional enzyme that catalyzes the D-ring expansion via intramolecular methoxy rearrangement, as well as the hydrolysis of the expanded D-ring. The protein is Terpene cyclase prhH of Penicillium brasilianum.